The following is a 303-amino-acid chain: Cyclin-dependent kinase 1 (303 aa).

The Protein kinase domain maps to 4–287; the sequence is YVKIEKIGEG…AREAMTHPYF (284 aa). Residues 10–18 and Lys-33 contribute to the ATP site; that span reads IGEGTYGVV. At Thr-14 the chain carries Phosphothreonine. Tyr-15 carries the phosphotyrosine; by wee1 and wee2 modification. Asp-128 (proton acceptor) is an active-site residue. Thr-161 carries the phosphothreonine; by cak modification.

Belongs to the protein kinase superfamily. CMGC Ser/Thr protein kinase family. CDC2/CDKX subfamily. As to quaternary structure, forms a stable but non-covalent complex with cyclin B in mature oocytes. Phosphorylation at Tyr-15 by wee1 and wee2 inhibits the protein kinase activity and acts negative regulator of entry into mitosis (G2 to M transition).

It is found in the nucleus. The protein resides in the cytoplasm. The protein localises to the cytoskeleton. It localises to the microtubule organizing center. Its subcellular location is the centrosome. It catalyses the reaction L-seryl-[protein] + ATP = O-phospho-L-seryl-[protein] + ADP + H(+). It carries out the reaction L-threonyl-[protein] + ATP = O-phospho-L-threonyl-[protein] + ADP + H(+). The catalysed reaction is [DNA-directed RNA polymerase] + ATP = phospho-[DNA-directed RNA polymerase] + ADP + H(+). Its activity is regulated as follows. Phosphorylation at Thr-14 or Tyr-15 inactivates the enzyme, while phosphorylation at Thr-161 activates it. In terms of biological role, plays a key role in the control of the eukaryotic cell cycle by modulating the centrosome cycle as well as mitotic onset; promotes G2-M transition via association with multiple interphase cyclins. During G2 and early mitosis, CDC25A/B/C-mediated dephosphorylation activates CDK1/cyclin complexes which phosphorylate several substrates that trigger at least centrosome separation, Golgi dynamics, nuclear envelope breakdown and chromosome condensation. Once chromosomes are condensed and aligned at the metaphase plate, CDK1 activity is switched off by WEE1- and PKMYT1-mediated phosphorylation to allow sister chromatid separation, chromosome decondensation, reformation of the nuclear envelope and cytokinesis. Catalyzes lamin (LMNA, LMNB1 and LMNB2) phosphorylation at the onset of mitosis, promoting nuclear envelope breakdown. The chain is Cyclin-dependent kinase 1 (cdk1) from Oryzias latipes (Japanese rice fish).